The primary structure comprises 139 residues: Large-conductance mechanosensitive channel (139 aa).

Helical transmembrane passes span 14–34 (VIDL…INSL) and 81–101 (GSFL…FMIV).

It belongs to the MscL family. As to quaternary structure, homopentamer.

The protein localises to the cell membrane. Functionally, channel that opens in response to stretch forces in the membrane lipid bilayer. May participate in the regulation of osmotic pressure changes within the cell. The chain is Large-conductance mechanosensitive channel from Chloroflexus aurantiacus (strain ATCC 29366 / DSM 635 / J-10-fl).